Reading from the N-terminus, the 417-residue chain is UDP-N-acetylglucosamine 1-carboxyvinyltransferase (417 aa).

23–24 (KN) serves as a coordination point for phosphoenolpyruvate. Arginine 93 contributes to the UDP-N-acetyl-alpha-D-glucosamine binding site. Aspartate 117 serves as the catalytic Proton donor. UDP-N-acetyl-alpha-D-glucosamine-binding residues include aspartate 305 and valine 327.

This sequence belongs to the EPSP synthase family. MurA subfamily.

The protein resides in the cytoplasm. It carries out the reaction phosphoenolpyruvate + UDP-N-acetyl-alpha-D-glucosamine = UDP-N-acetyl-3-O-(1-carboxyvinyl)-alpha-D-glucosamine + phosphate. Its pathway is cell wall biogenesis; peptidoglycan biosynthesis. Functionally, cell wall formation. Adds enolpyruvyl to UDP-N-acetylglucosamine. The polypeptide is UDP-N-acetylglucosamine 1-carboxyvinyltransferase (Mycolicibacterium paratuberculosis (strain ATCC BAA-968 / K-10) (Mycobacterium paratuberculosis)).